The following is a 399-amino-acid chain: Chromosomal replication initiator protein DnaA (399 aa).

The domain I, interacts with DnaA modulators stretch occupies residues 1-64 (MELNALIKKI…EEEVRKLIEV (64 aa)). Residues 64–77 (VKEKEEKKKVEIKD) form a domain II region. The segment at 78-290 (FLNPKYTLEN…GKIKLIKLKG (213 aa)) is domain III, AAA+ region. ADP-binding residues include I89, N94, G122, T123, G124, K125, T126, and H127. Position 89 (I89) interacts with ATP. Position 122 (G122) interacts with ATP. ATP contacts are provided by G124, K125, T126, and H127. Residue T126 coordinates Mg(2+). Residue V156 coordinates ssDNA. Residue D180 participates in ATP binding. D181 contacts Mg(2+). K188, R190, and T191 together coordinate ssDNA. R277 is an ATP binding site. Residues 291-399 (FEGLERKERK…LEKQAFDKIC (109 aa)) form a domain IV, binds dsDNA region.

Belongs to the DnaA family. In terms of assembly, in the presence of ATP analog AMP-PCP forms a linear, right-handed spiral filament with 4 subunits arranged head-to-tail, about 122 Angstroms wide and about 360 Angstroms long. Mg(2+)-AMP-PCP binds at the subunit interface with the gamma phosphate coordinated by adjacent subunits. dsDNA probably wraps on the outside of the filament. ssDNA binds to the center of the helical filament via the AAA+ domain, which stretches the DNA.

Its subcellular location is the cytoplasm. Its function is as follows. Plays an essential role in the initiation and regulation of chromosomal replication. ATP-DnaA binds to the origin of replication (oriC) to initiate formation of the DNA replication initiation complex once per cell cycle. Binds the DnaA box (a 9 base pair repeat at the origin) and separates the double-stranded (ds)DNA. Forms a right-handed helical filament on oriC DNA; dsDNA binds to the exterior of the filament while single-stranded (ss)DNA is stabiized in the filament's interior. The ATP-DnaA-oriC complex binds and stabilizes one strand of the AT-rich DNA unwinding element (DUE), permitting loading of DNA polymerase. After initiation quickly degrades to an ADP-DnaA complex that is not apt for DNA replication. Binds acidic phospholipids. Able to melt short unstable dsDNA (15-mer with melting temperature, TM, 43 degrees Celsius) in the presence of a non-hydrolyzable ATP analog; a more stable dsDNA (20-mer, TM 55 degrees Celsius) is poor substrate. ADP does not support dsDNA melting. Addition of DnaA-AMP-PCP (an ATP analog, beta,gamma-methyleneadenosine 5'-triphosphate) to an oric-containing plasmid causes a DNA shift to more positively supercoiled topological species, stabilizing a positive wrap and right-handed filament as seen in the crystal structure without DNA. Filament formation generated by positive supercoiling may destabilize the origin unwinding element through compensatory negative supercoiling strain. This Aquifex aeolicus (strain VF5) protein is Chromosomal replication initiator protein DnaA.